The sequence spans 190 residues: dCTP deaminase, dUMP-forming (190 aa).

Residues 101–106, D119, 127–129, Q148, Y162, and Q174 each bind dCTP; these read KSSLGR and TLE. E129 serves as the catalytic Proton donor/acceptor. The interval 163–190 is disordered; the sequence is GSSQVGSKYQGQRGPTPSKSYQNFVKSN.

The protein belongs to the dCTP deaminase family. In terms of assembly, homotrimer.

The enzyme catalyses dCTP + 2 H2O = dUMP + NH4(+) + diphosphate. The protein operates within pyrimidine metabolism; dUMP biosynthesis; dUMP from dCTP: step 1/1. Its function is as follows. Bifunctional enzyme that catalyzes both the deamination of dCTP to dUTP and the hydrolysis of dUTP to dUMP without releasing the toxic dUTP intermediate. In Mycolicibacterium gilvum (strain PYR-GCK) (Mycobacterium gilvum (strain PYR-GCK)), this protein is dCTP deaminase, dUMP-forming.